A 258-amino-acid polypeptide reads, in one-letter code: Phosphate import ATP-binding protein PstB (258 aa).

Residues 12–253 (IEVKNLNFYY…PARKETEDYI (242 aa)) form the ABC transporter domain. 44-51 (GPSGCGKS) provides a ligand contact to ATP.

The protein belongs to the ABC transporter superfamily. Phosphate importer (TC 3.A.1.7) family. As to quaternary structure, the complex is composed of two ATP-binding proteins (PstB), two transmembrane proteins (PstC and PstA) and a solute-binding protein (PstS).

The protein resides in the cell inner membrane. It carries out the reaction phosphate(out) + ATP + H2O = ADP + 2 phosphate(in) + H(+). In terms of biological role, part of the ABC transporter complex PstSACB involved in phosphate import. Responsible for energy coupling to the transport system. In Bordetella avium (strain 197N), this protein is Phosphate import ATP-binding protein PstB.